The primary structure comprises 450 residues: Oxygen-independent coproporphyrinogen III oxidase (450 aa).

The 238-residue stretch at 45 to 282 folds into the Radical SAM core domain; it reads IPAGGSISLY…RTLILWDGYQ (238 aa). Residue Tyr-54 coordinates S-adenosyl-L-methionine. Cys-60 and Cys-64 together coordinate [4Fe-4S] cluster. Phe-66 contacts S-adenosyl-L-methionine. Position 67 (Cys-67) interacts with [4Fe-4S] cluster. S-adenosyl-L-methionine is bound by residues Gly-111, 112–113, Glu-144, Gln-171, Arg-183, Asp-208, Ala-242, and Ile-328; that span reads GT.

This sequence belongs to the anaerobic coproporphyrinogen-III oxidase family. Monomer. [4Fe-4S] cluster is required as a cofactor.

It is found in the cytoplasm. It carries out the reaction coproporphyrinogen III + 2 S-adenosyl-L-methionine = protoporphyrinogen IX + 2 5'-deoxyadenosine + 2 L-methionine + 2 CO2. The protein operates within porphyrin-containing compound metabolism; protoporphyrin-IX biosynthesis; protoporphyrinogen-IX from coproporphyrinogen-III (AdoMet route): step 1/1. Involved in the heme and chlorophyll biosynthesis. Catalyzes the anaerobic oxidative decarboxylation of propionate groups of rings A and B of coproporphyrinogen III to yield the vinyl groups in protoporphyrinogen IX. The sequence is that of Oxygen-independent coproporphyrinogen III oxidase (hemZ) from Cereibacter sphaeroides (strain ATCC 17023 / DSM 158 / JCM 6121 / CCUG 31486 / LMG 2827 / NBRC 12203 / NCIMB 8253 / ATH 2.4.1.) (Rhodobacter sphaeroides).